The chain runs to 127 residues: Fluoride-specific ion channel FluC (127 aa).

A run of 4 helical transmembrane segments spans residues 4–24 (LLLAVFIGGGTGSVARWLLSM), 35–55 (LGTLTANLIGAFIIGMGFAWF), 71–91 (TGFCGGLTTFSTFSAEVVFLL), and 103–123 (VFVNLLGSFAMTALAFWLFSA). 2 residues coordinate Na(+): Gly-75 and Thr-78.

It belongs to the fluoride channel Fluc/FEX (TC 1.A.43) family.

Its subcellular location is the cell inner membrane. It catalyses the reaction fluoride(in) = fluoride(out). Its activity is regulated as follows. Na(+) is not transported, but it plays an essential structural role and its presence is essential for fluoride channel function. Fluoride-specific ion channel. Important for reducing fluoride concentration in the cell, thus reducing its toxicity. In Escherichia coli O7:K1 (strain IAI39 / ExPEC), this protein is Fluoride-specific ion channel FluC.